Here is a 319-residue protein sequence, read N- to C-terminus: MATTKPYRVLLYYMYTTIENPEEFAAEHLEFCNSLELKGRILVAKEGINGTCSGTVEQTEKYMEAMNNDPRFDGIVFKIDEADGHAFKKMHVRPRPELVTLRLEDDINPHEITGKYLEPKDFYEAMKQEDTVIIDARNDYEFDLGHFKGAIKPDIESFRELPDWIRENKEVLEGKKILTYCTGGIRCEKFSGWLVREGYEDVSQLHGGIVTYGKDPEVQGELWDGQCYVFDERIAVPVNQKEHVIVGKDHFTGEPCERYVNCANPECNKKILCSEENEAKYLRACSHECRVSPRNRYVIQHELTEEQVAAALEKIEAGK.

A Rhodanese domain is found at 127–221; sequence KQEDTVIIDA…YGKDPEVQGE (95 aa). The active-site Cysteine persulfide intermediate is Cys-181.

It belongs to the TrhO family.

It catalyses the reaction uridine(34) in tRNA + AH2 + O2 = 5-hydroxyuridine(34) in tRNA + A + H2O. Catalyzes oxygen-dependent 5-hydroxyuridine (ho5U) modification at position 34 in tRNAs. This chain is tRNA uridine(34) hydroxylase, found in Bacillus anthracis (strain A0248).